A 382-amino-acid chain; its full sequence is 1-deoxy-D-xylulose 5-phosphate reductoisomerase (382 aa).

Threonine 11, glycine 12, serine 13, isoleucine 14, and asparagine 123 together coordinate NADPH. A 1-deoxy-D-xylulose 5-phosphate-binding site is contributed by lysine 124. Position 125 (glutamate 125) interacts with NADPH. Aspartate 149 serves as a coordination point for Mn(2+). Serine 150, glutamate 151, serine 173, and histidine 196 together coordinate 1-deoxy-D-xylulose 5-phosphate. Residue glutamate 151 participates in Mn(2+) binding. NADPH is bound at residue glycine 202. 1-deoxy-D-xylulose 5-phosphate-binding residues include serine 209, asparagine 214, lysine 215, and glutamate 218. Residue glutamate 218 participates in Mn(2+) binding.

Belongs to the DXR family. Requires Mg(2+) as cofactor. The cofactor is Mn(2+).

The catalysed reaction is 2-C-methyl-D-erythritol 4-phosphate + NADP(+) = 1-deoxy-D-xylulose 5-phosphate + NADPH + H(+). It functions in the pathway isoprenoid biosynthesis; isopentenyl diphosphate biosynthesis via DXP pathway; isopentenyl diphosphate from 1-deoxy-D-xylulose 5-phosphate: step 1/6. Catalyzes the NADPH-dependent rearrangement and reduction of 1-deoxy-D-xylulose-5-phosphate (DXP) to 2-C-methyl-D-erythritol 4-phosphate (MEP). The sequence is that of 1-deoxy-D-xylulose 5-phosphate reductoisomerase from Phocaeicola vulgatus (strain ATCC 8482 / DSM 1447 / JCM 5826 / CCUG 4940 / NBRC 14291 / NCTC 11154) (Bacteroides vulgatus).